Reading from the N-terminus, the 1673-residue chain is Calmodulin-binding transcription activator 1 (1673 aa).

A DNA-binding region (CG-1) is located at residues 63 to 188 (KCSSLPKERH…YLNVPAIEDC (126 aa)). Positions 112–119 (RKKVKYRK) match the Nuclear localization signal motif. Residues 283 to 375 (HRIISPKVEP…LNSDPDMVDS (93 aa)) form a disordered region. Positions 302–313 (EVQHNDVSEGKH) are enriched in basic and acidic residues. Residues 337–367 (HQSSTEVSSTNQVEVPDTTQSSPVSISSGLN) show a composition bias toward polar residues. Residues 875–953 (DYSPEWSYPE…ISNSVVFEYK (79 aa)) enclose the IPT/TIG domain. The segment at 990-1021 (MAEMTGSQQHKQASGGGSSGGGSGSGNGGSQA) is disordered. Gly residues predominate over residues 1003 to 1018 (SGGGSSGGGSGSGNGG). ANK repeat units follow at residues 1064–1093 (RGMT…KHAD), 1109–1129 (FSCT…AVVL), and 1143–1172 (LGRL…DEQA). Disordered regions lie at residues 1215–1246 (ASTN…PKKH) and 1264–1317 (ALSL…GSQP). Residues 1273–1289 (RKQSPSSKQSVPETLSP) show a composition bias toward polar residues. 3 consecutive IQ domains span residues 1547–1576 (QEVA…AAIL), 1577–1599 (IQSK…AAVL), and 1600–1622 (IQKY…TAVI).

This sequence belongs to the CAMTA family. May interact with calmodulin. Normally expressed in non-neoplastic adult central nervous system tissues: detected in whole brain, cerebellum, brain cortex, occipital lobe, frontal lobe, temporal lobe, putamen. Expression levels are low in oligodendroglial tumors, and are reduced by half in oligodendroglioma and astrocytoma cases with 1p loss of heterozygosity. Detected in neuroblastic-type cultured neuroblastoma cells. Expressed in heart and kidney.

It is found in the nucleus. The protein resides in the cytoplasm. Its function is as follows. Transcriptional activator. The polypeptide is Calmodulin-binding transcription activator 1 (Homo sapiens (Human)).